We begin with the raw amino-acid sequence, 215 residues long: Adenylate kinase (215 aa).

10–15 (GAGKGT) provides a ligand contact to ATP. An NMP region spans residues 30 to 59 (STGDIFRKNISENTPLGMEARSYMDKGLLV). AMP is bound by residues Thr31, Arg36, 57-59 (LLV), 85-88 (GFPR), and Gln92. Residues 126–163 (GRRVCTSCGGSFHIKFNPPTIDGKCNLCGSDIVQRKDD) form an LID region. An ATP-binding site is contributed by Arg127. Residues Cys130 and Cys133 each contribute to the Zn(2+) site. 136-137 (SF) is a binding site for ATP. 2 residues coordinate Zn(2+): Cys150 and Cys153. Positions 160 and 171 each coordinate AMP. Lys199 is an ATP binding site.

It belongs to the adenylate kinase family. In terms of assembly, monomer.

It is found in the cytoplasm. It catalyses the reaction AMP + ATP = 2 ADP. Its pathway is purine metabolism; AMP biosynthesis via salvage pathway; AMP from ADP: step 1/1. Functionally, catalyzes the reversible transfer of the terminal phosphate group between ATP and AMP. Plays an important role in cellular energy homeostasis and in adenine nucleotide metabolism. The polypeptide is Adenylate kinase (Clostridium botulinum (strain Alaska E43 / Type E3)).